Here is a 1119-residue protein sequence, read N- to C-terminus: Putative transcription factor SEF1 (1119 aa).

Disordered regions lie at residues 1 to 70 (MGDP…TQSR) and 86 to 105 (QNGEDSSNISNNSNAVSKGK). The span at 47–70 (LHTQQSYYGNGTDGASESALTQSR) shows a compositional bias: polar residues. The segment at residues 118 to 148 (CTHCRQHKIKCNASEKFPAPCSRCERMGLHC) is a DNA-binding region (zn(2)-C6 fungal-type). 5 disordered regions span residues 236-290 (QLLQ…PANT), 306-335 (SQQISSSSPQNSSPTTTGHSPANDLSSSKQ), 894-913 (ASSSSTATRLNADNPTTDTN), 926-962 (KKSSKSSDTPTNKPKFNSTSSIPTATPTSEQRAAHNT), and 994-1018 (SADSNGTSNNNIPNSTAPLNTPDTN). The segment covering 243 to 260 (TTTTNPTTSSNSKVVTPT) has biased composition (low complexity). Positions 261 to 288 (GSDHSPASHNGGSLSSGKPQLLNDSVPA) are enriched in polar residues. Residues 306–322 (SQQISSSSPQNSSPTTT) are compositionally biased toward low complexity. Polar residues-rich tracts occupy residues 323–335 (GHSPANDLSSSKQ), 902–913 (RLNADNPTTDTN), and 931–942 (SSDTPTNKPKFN). The segment covering 943–954 (STSSIPTATPTS) has biased composition (low complexity).

Its subcellular location is the nucleus. Its function is as follows. Putative transcription factor. Suppresses the lethal phenotype of RPM2 deletion. The chain is Putative transcription factor SEF1 (SEF1) from Kluyveromyces lactis (strain ATCC 8585 / CBS 2359 / DSM 70799 / NBRC 1267 / NRRL Y-1140 / WM37) (Yeast).